The sequence spans 87 residues: Small ribosomal subunit protein bS20 (87 aa).

Basic residues predominate over residues 1 to 11; it reads MANIKSAKKRA. Residues 1 to 27 are disordered; that stretch reads MANIKSAKKRAVQSEKRRQHNASQRSM.

This sequence belongs to the bacterial ribosomal protein bS20 family.

In terms of biological role, binds directly to 16S ribosomal RNA. The sequence is that of Small ribosomal subunit protein bS20 from Haemophilus influenzae (strain PittEE).